A 197-amino-acid polypeptide reads, in one-letter code: Inner membrane-spanning protein YciB (197 aa).

The next 5 membrane-spanning stretches (helical) occupy residues 36–56 (IYSA…ALFL), 64–84 (GQWL…TFHS), 90–110 (WKAP…HFIG), 135–155 (LAWI…AFTF), and 162–182 (FKVF…GVYL).

Belongs to the YciB family.

Its subcellular location is the cell inner membrane. Functionally, plays a role in cell envelope biogenesis, maintenance of cell envelope integrity and membrane homeostasis. The chain is Inner membrane-spanning protein YciB from Pseudomonas putida (strain GB-1).